We begin with the raw amino-acid sequence, 584 residues long: Actin-binding protein IPP (584 aa).

Residues 37-104 enclose the BTB domain; sequence CDVQLQVGQE…IYTGIVNIGV (68 aa). Kelch repeat units lie at residues 289–343, 344–390, 391–437, 439–485, 487–533, and 535–583; these read YLYA…VLGG, MVYA…VCYG, AIYA…EMQG, IYVI…ALND, IYSV…AVNG, and LYVS…GVAV.

The protein resides in the cytoplasm. It is found in the cytoskeleton. Functionally, may play a role in organizing the actin cytoskeleton. The protein is Actin-binding protein IPP (IPP) of Homo sapiens (Human).